Reading from the N-terminus, the 278-residue chain is Diaminopimelate epimerase (278 aa).

3 residues coordinate substrate: Asn-13, Gln-46, and Asn-65. Residue Cys-74 is the Proton donor of the active site. Substrate contacts are provided by residues 75-76 (GN), Asn-157, Asn-190, and 208-209 (ER). Cys-217 functions as the Proton acceptor in the catalytic mechanism. 218 to 219 (GT) serves as a coordination point for substrate.

This sequence belongs to the diaminopimelate epimerase family. As to quaternary structure, homodimer.

It localises to the cytoplasm. It carries out the reaction (2S,6S)-2,6-diaminopimelate = meso-2,6-diaminopimelate. Its pathway is amino-acid biosynthesis; L-lysine biosynthesis via DAP pathway; DL-2,6-diaminopimelate from LL-2,6-diaminopimelate: step 1/1. Catalyzes the stereoinversion of LL-2,6-diaminopimelate (L,L-DAP) to meso-diaminopimelate (meso-DAP), a precursor of L-lysine and an essential component of the bacterial peptidoglycan. The protein is Diaminopimelate epimerase of Magnetococcus marinus (strain ATCC BAA-1437 / JCM 17883 / MC-1).